The primary structure comprises 462 residues: Indoleacetamide hydrolase (462 aa).

Catalysis depends on charge relay system residues Lys74 and Ser149. The Acyl-ester intermediate role is filled by Ser173.

This sequence belongs to the amidase family.

It participates in plant hormone metabolism; auxin biosynthesis. Its function is as follows. Hydrolyzes indole-3-acetamide (IAM) into indole-3-acetic acid (IAA). This Allorhizobium ampelinum (strain ATCC BAA-846 / DSM 112012 / S4) (Agrobacterium vitis (strain S4)) protein is Indoleacetamide hydrolase (iaaH).